The chain runs to 258 residues: Phosphoribosylaminoimidazole-succinocarboxamide synthase (258 aa).

Belongs to the SAICAR synthetase family.

The enzyme catalyses 5-amino-1-(5-phospho-D-ribosyl)imidazole-4-carboxylate + L-aspartate + ATP = (2S)-2-[5-amino-1-(5-phospho-beta-D-ribosyl)imidazole-4-carboxamido]succinate + ADP + phosphate + 2 H(+). It functions in the pathway purine metabolism; IMP biosynthesis via de novo pathway; 5-amino-1-(5-phospho-D-ribosyl)imidazole-4-carboxamide from 5-amino-1-(5-phospho-D-ribosyl)imidazole-4-carboxylate: step 1/2. The protein is Phosphoribosylaminoimidazole-succinocarboxamide synthase of Rhizorhabdus wittichii (strain DSM 6014 / CCUG 31198 / JCM 15750 / NBRC 105917 / EY 4224 / RW1) (Sphingomonas wittichii).